Here is a 3291-residue protein sequence, read N- to C-terminus: Protocadherin-16 (3291 aa).

The signal sequence occupies residues 1-35; that stretch reads MQEELSVALSCPGMKSLGTLLPLLVLLGTTVPGIR. Topologically, residues 36–2933 are extracellular; sequence GQAGSLDLQI…PDLNLLLVGA (2898 aa). Cadherin domains are found at residues 37 to 137, 138 to 249, 250 to 356, 369 to 466, 476 to 572, 573 to 679, 680 to 784, 785 to 888, 889 to 994, 995 to 1105, 1100 to 1205, 1218 to 1317, 1326 to 1429, 1430 to 1539, 1539 to 1642, 1643 to 1744, 1745 to 1848, 1849 to 1953, 1976 to 2061, 2062 to 2164, 2165 to 2270, 2270 to 2369, 2370 to 2475, 2476 to 2595, 2596 to 2699, 2700 to 2806, and 2807 to 2926; these read QAGS…APAF, PQAR…APAF, NQSR…QPSM, VSEA…APAF, LPEV…EPQF, QRTF…PPQF, YPRE…PPIF, EQLQ…SPAF, PAPE…APRF, DSPT…EPTF, SEEP…SPTF, IQVP…SPDL, VPVV…APAF, ARDP…APVF, FASP…APAF, PQQE…SPTF, GNTH…APAF, PVPS…APAF, LATL…GPRF, PRAN…APRF, LQPH…RPTI, IPQP…VPIF, SQSL…APSF, TLPH…PPVF, TRAS…GPAF, PLSL…DPVF, and LAPS…APDL. Asn-396 carries N-linked (GlcNAc...) asparagine glycosylation. Residues 951–971 form a disordered region; sequence GPPGGPPHELEVEAQDGGSPP. N-linked (GlcNAc...) asparagine glycosylation occurs at Asn-1711. The N-linked (GlcNAc...) asparagine glycan is linked to Asn-2354. The N-linked (GlcNAc...) asparagine glycan is linked to Asn-2562. A helical transmembrane segment spans residues 2934 to 2954; sequence VAASLGVVVVLALAALVLGLV. Topologically, residues 2955–3291 are cytoplasmic; the sequence is RARSRKAEAA…EPPDDTELRI (337 aa). The interval 2978–3033 is disordered; it reads SLQKLGREPPSPPPSEHLYHQTLPSYGGPGAGGPYPRGGSLDPSHSSGRGSAEAAE. Over residues 3004–3013 the composition is skewed to gly residues; that stretch reads GGPGAGGPYP. Position 3048 is a phosphoserine (Ser-3048). Disordered stretches follow at residues 3051-3080 and 3226-3291; these read SSLA…PAPD and ASHR…ELRI. Low complexity predominate over residues 3237–3259; it reads SLSSAAMSPSFSPSLSPLAARSP. Residues 3270–3279 are compositionally biased toward polar residues; it reads PSASALSTES.

In terms of assembly, heterophilic interaction with FAT4; this interaction affects their respective protein levels.

The protein resides in the cell membrane. Its function is as follows. Calcium-dependent cell-adhesion protein. Mediates functions in neuroprogenitor cell proliferation and differentiation. The chain is Protocadherin-16 (Dchs1) from Rattus norvegicus (Rat).